Reading from the N-terminus, the 119-residue chain is Large ribosomal subunit protein uL18 (119 aa).

Positions 1–25 are disordered; that stretch reads MITKIDKNKVRKKRHARVRSKISGT. Residues 9–20 are compositionally biased toward basic residues; sequence KVRKKRHARVRS.

It belongs to the universal ribosomal protein uL18 family. In terms of assembly, part of the 50S ribosomal subunit; part of the 5S rRNA/L5/L18/L25 subcomplex. Contacts the 5S and 23S rRNAs.

This is one of the proteins that bind and probably mediate the attachment of the 5S RNA into the large ribosomal subunit, where it forms part of the central protuberance. This is Large ribosomal subunit protein uL18 from Listeria monocytogenes serotype 4b (strain CLIP80459).